We begin with the raw amino-acid sequence, 463 residues long: L-seryl-tRNA(Sec) selenium transferase (463 aa).

Lys-295 carries the N6-(pyridoxal phosphate)lysine modification.

The protein belongs to the SelA family. Homodecamer; pentamer of dimers. Binds only one seryl-tRNA(Sec) per dimer. It depends on pyridoxal 5'-phosphate as a cofactor.

The protein localises to the cytoplasm. It carries out the reaction L-seryl-tRNA(Sec) + selenophosphate + H(+) = L-selenocysteinyl-tRNA(Sec) + phosphate. It functions in the pathway aminoacyl-tRNA biosynthesis; selenocysteinyl-tRNA(Sec) biosynthesis; selenocysteinyl-tRNA(Sec) from L-seryl-tRNA(Sec) (bacterial route): step 1/1. In terms of biological role, converts seryl-tRNA(Sec) to selenocysteinyl-tRNA(Sec) required for selenoprotein biosynthesis. The chain is L-seryl-tRNA(Sec) selenium transferase from Shigella flexneri.